The primary structure comprises 856 residues: Villin-like protein (856 aa).

Gelsolin-like repeat units follow at residues 22–74 (RKMV…EAQG), 146–186 (VSAT…SEKA), 263–307 (LVVL…QERK), 401–450 (LHRQ…DEIE), 521–561 (TRTM…DQRE), and 624–665 (LVLA…WKEA). The disordered stretch occupies residues 762-796 (SQDSSENDLVRSPKSAGSRTSSSVSSTSATINGGL). Over residues 776-791 (SAGSRTSSSVSSTSAT) the composition is skewed to low complexity. Positions 790–856 (ATINGGLRRE…RQEKKQLGFF (67 aa)) constitute an HP domain.

This sequence belongs to the villin/gelsolin family. In terms of tissue distribution, ubiquitously expressed in 16 tissues examined.

In terms of biological role, possible tumor suppressor. The polypeptide is Villin-like protein (VILL) (Homo sapiens (Human)).